Reading from the N-terminus, the 396-residue chain is NADH-quinone oxidoreductase subunit D 1 (396 aa).

Belongs to the complex I 49 kDa subunit family. NDH-1 is composed of 14 different subunits. Subunits NuoB, C, D, E, F, and G constitute the peripheral sector of the complex.

The protein resides in the cell inner membrane. It catalyses the reaction a quinone + NADH + 5 H(+)(in) = a quinol + NAD(+) + 4 H(+)(out). Functionally, NDH-1 shuttles electrons from NADH, via FMN and iron-sulfur (Fe-S) centers, to quinones in the respiratory chain. The immediate electron acceptor for the enzyme in this species is believed to be ubiquinone. Couples the redox reaction to proton translocation (for every two electrons transferred, four hydrogen ions are translocated across the cytoplasmic membrane), and thus conserves the redox energy in a proton gradient. This Beijerinckia indica subsp. indica (strain ATCC 9039 / DSM 1715 / NCIMB 8712) protein is NADH-quinone oxidoreductase subunit D 1.